Here is a 369-residue protein sequence, read N- to C-terminus: Anhydro-N-acetylmuramic acid kinase (369 aa).

12 to 19 (GTSMDGVD) is an ATP binding site.

The protein belongs to the anhydro-N-acetylmuramic acid kinase family.

The enzyme catalyses 1,6-anhydro-N-acetyl-beta-muramate + ATP + H2O = N-acetyl-D-muramate 6-phosphate + ADP + H(+). It participates in amino-sugar metabolism; 1,6-anhydro-N-acetylmuramate degradation. It functions in the pathway cell wall biogenesis; peptidoglycan recycling. Catalyzes the specific phosphorylation of 1,6-anhydro-N-acetylmuramic acid (anhMurNAc) with the simultaneous cleavage of the 1,6-anhydro ring, generating MurNAc-6-P. Is required for the utilization of anhMurNAc either imported from the medium or derived from its own cell wall murein, and thus plays a role in cell wall recycling. The polypeptide is Anhydro-N-acetylmuramic acid kinase (Shewanella amazonensis (strain ATCC BAA-1098 / SB2B)).